Consider the following 90-residue polypeptide: Small ribosomal subunit protein uS15 (90 aa).

It belongs to the universal ribosomal protein uS15 family. Part of the 30S ribosomal subunit. Forms a bridge to the 50S subunit in the 70S ribosome, contacting the 23S rRNA.

Its function is as follows. One of the primary rRNA binding proteins, it binds directly to 16S rRNA where it helps nucleate assembly of the platform of the 30S subunit by binding and bridging several RNA helices of the 16S rRNA. Functionally, forms an intersubunit bridge (bridge B4) with the 23S rRNA of the 50S subunit in the ribosome. In Herpetosiphon aurantiacus (strain ATCC 23779 / DSM 785 / 114-95), this protein is Small ribosomal subunit protein uS15.